Consider the following 297-residue polypeptide: Phosphoribosylaminoimidazole-succinocarboxamide synthase (297 aa).

The protein belongs to the SAICAR synthetase family.

The enzyme catalyses 5-amino-1-(5-phospho-D-ribosyl)imidazole-4-carboxylate + L-aspartate + ATP = (2S)-2-[5-amino-1-(5-phospho-beta-D-ribosyl)imidazole-4-carboxamido]succinate + ADP + phosphate + 2 H(+). It functions in the pathway purine metabolism; IMP biosynthesis via de novo pathway; 5-amino-1-(5-phospho-D-ribosyl)imidazole-4-carboxamide from 5-amino-1-(5-phospho-D-ribosyl)imidazole-4-carboxylate: step 1/2. This chain is Phosphoribosylaminoimidazole-succinocarboxamide synthase, found in Mycobacteroides abscessus (strain ATCC 19977 / DSM 44196 / CCUG 20993 / CIP 104536 / JCM 13569 / NCTC 13031 / TMC 1543 / L948) (Mycobacterium abscessus).